Here is a 144-residue protein sequence, read N- to C-terminus: Large ribosomal subunit protein uL13 (144 aa).

The disordered stretch occupies residues 125–144 (YRGPEHPHQAQKPQPLEVKA).

It belongs to the universal ribosomal protein uL13 family. Part of the 50S ribosomal subunit.

This protein is one of the early assembly proteins of the 50S ribosomal subunit, although it is not seen to bind rRNA by itself. It is important during the early stages of 50S assembly. This chain is Large ribosomal subunit protein uL13, found in Aquifex aeolicus (strain VF5).